The primary structure comprises 179 residues: UPF0227 protein VC0395_A1482/VC395_2007 (179 aa).

Belongs to the UPF0227 family.

This chain is UPF0227 protein VC0395_A1482/VC395_2007, found in Vibrio cholerae serotype O1 (strain ATCC 39541 / Classical Ogawa 395 / O395).